The chain runs to 269 residues: Histone deacetylase HDT1 (269 aa).

Residues 97-269 form a disordered region; it reads PFEEEEDDED…HSKAKHSAGK (173 aa). Composition is skewed to acidic residues over residues 98-115 and 153-179; these read FEEEEDDEDDYDESDEDI and KDDEDESSDDDDSDMGEDEDDSDDSEE. The span at 228-238 shows a compositional bias: polar residues; sequence PSKQASKTPKS. A C2H2-type zinc finger spans residues 242 to 265; it reads HHCKPCNRSFGSEGALDSHSKAKH.

It belongs to the histone deacetylase HD2 family. As to expression, predominantly expressed in ovaries. Accumulates predominantly in the micropylar region of the ovule's integument.

The protein localises to the nucleus. Its subcellular location is the nucleolus. In terms of biological role, mediates the deacetylation of lysine residues on the N-terminal part of the core histones (H2A, H2B, H3 and H4). Histone deacetylation gives a tag for epigenetic repression and plays an important role in transcriptional regulation, cell cycle progression and developmental events. The sequence is that of Histone deacetylase HDT1 (HDT1) from Solanum chacoense (Chaco potato).